The following is a 162-amino-acid chain: Calcium vector protein (162 aa).

Residue Ala2 is modified to N-acetylalanine. EF-hand domains lie at 12 to 47, 49 to 84, 86 to 121, and 123 to 158; these read EEKD…LGQT, TKRE…KWVR, DDEE…VGEE, and LTDA…SKNA. Residue Lys96 is modified to N6,N6,N6-trimethyllysine. The Ca(2+) site is built by Asp99, Asn101, Asp103, and Glu110. N6,N6,N6-trimethyllysine is present on Lys117. Positions 136, 138, 140, and 147 each coordinate Ca(2+).

It is found in the cytoplasm. In terms of biological role, the exact function of this protein is not yet known. It interacts with CAVPT, a protein also of unknown function, in a calcium-dependent way. This protein binds two calcium ions. In Branchiostoma lanceolatum (Common lancelet), this protein is Calcium vector protein.